Here is an 883-residue protein sequence, read N- to C-terminus: Serine/threonine-protein kinase greatwall (883 aa).

N-acetylmethionine is present on methionine 1. Positions 35-839 constitute a Protein kinase domain; it reads FTIVKPISRG…IKELKCHPLF (805 aa). ATP-binding positions include 41 to 49 and lysine 62; that span reads ISRGAFGKV. The active-site Proton acceptor is the aspartate 156. Threonine 209 and threonine 224 each carry phosphothreonine. Phosphoserine is present on residues serine 295, serine 373, and serine 456. At threonine 523 the chain carries Phosphothreonine. Phosphoserine is present on residues serine 555, serine 559, serine 634, serine 661, and serine 672. Threonine 726 bears the Phosphothreonine mark. Phosphoserine is present on serine 729. Threonine 745 carries the post-translational modification Phosphothreonine; by CDK1. Residues 840 to 883 enclose the AGC-kinase C-terminal domain; sequence SDVDWENLQHQTMPFIPQPDDETDTSYFEARNNAQHLTVSGFSL. Serine 879 and serine 882 each carry phosphoserine.

This sequence belongs to the protein kinase superfamily. AGC Ser/Thr protein kinase family. Post-translationally, phosphorylation at Thr-745 by CDK1 during M phase activates its kinase activity. Maximum phosphorylation occurs in prometaphase.

Its subcellular location is the cytoplasm. It localises to the cytoskeleton. It is found in the microtubule organizing center. The protein localises to the centrosome. The protein resides in the nucleus. It carries out the reaction L-seryl-[protein] + ATP = O-phospho-L-seryl-[protein] + ADP + H(+). The catalysed reaction is L-threonyl-[protein] + ATP = O-phospho-L-threonyl-[protein] + ADP + H(+). Functionally, serine/threonine kinase that plays a key role in M phase by acting as a regulator of mitosis entry and maintenance. Acts by promoting the inactivation of protein phosphatase 2A (PP2A) during M phase: does not directly inhibit PP2A but acts by mediating phosphorylation and subsequent activation of ARPP19 and ENSA at 'Ser-62' and 'Ser-67', respectively. ARPP19 and ENSA are phosphatase inhibitors that specifically inhibit the PPP2R2D (PR55-delta) subunit of PP2A. Inactivation of PP2A during M phase is essential to keep cyclin-B1-CDK1 activity high. Following DNA damage, it is also involved in checkpoint recovery by being inhibited. The sequence is that of Serine/threonine-protein kinase greatwall (MASTL) from Canis lupus familiaris (Dog).